A 480-amino-acid polypeptide reads, in one-letter code: Uridine 5'-monophosphate synthase (480 aa).

Position 2 is an N-acetylalanine (Ala-2). An OPRTase region spans residues 2–214; the sequence is AVARAALGPL…VFVAANHNGS (213 aa). The residue at position 37 (Tyr-37) is a Phosphotyrosine. Position 214 is a phosphoserine (Ser-214). A domain linker region spans residues 215–220; sequence PLSIKE. Residues 221–480 are OMPdecase; sequence APKELSFGAR…WEAYLSRLGV (260 aa). Ser-257 lines the orotidine 5'-phosphate pocket. Residues Ser-257, Asp-259, and 281–283 contribute to the UMP site; that span reads KTH. Lys-281 is an orotidine 5'-phosphate binding site. Residues Asp-312, Lys-314, and Asp-317 each act as for OMPdecase activity in the active site. Orotidine 5'-phosphate is bound by residues Lys-314, Asp-317, Thr-321, Ser-372, 430-432, and 450-451; these read QQY and GR. UMP is bound by residues Asp-317, Thr-321, Ser-372, 430–432, and 450–451; these read QQY and GR.

It in the N-terminal section; belongs to the purine/pyrimidine phosphoribosyltransferase family. In the C-terminal section; belongs to the OMP decarboxylase family. As to quaternary structure, homodimer; dimerization is required for enzymatic activity.

It catalyses the reaction orotidine 5'-phosphate + diphosphate = orotate + 5-phospho-alpha-D-ribose 1-diphosphate. The enzyme catalyses orotidine 5'-phosphate + H(+) = UMP + CO2. Its pathway is pyrimidine metabolism; UMP biosynthesis via de novo pathway; UMP from orotate: step 1/2. The protein operates within pyrimidine metabolism; UMP biosynthesis via de novo pathway; UMP from orotate: step 2/2. Functionally, bifunctional enzyme catalyzing the last two steps of de novo pyrimidine biosynthesis, orotate phosphoribosyltransferase (OPRT), which converts orotate to orotidine-5'-monophosphate (OMP), and orotidine-5'-monophosphate decarboxylase (ODC), the terminal enzymatic reaction that decarboxylates OMP to uridine monophosphate (UMP). The polypeptide is Uridine 5'-monophosphate synthase (Homo sapiens (Human)).